Here is a 242-residue protein sequence, read N- to C-terminus: Ribonuclease 3 (242 aa).

The RNase III domain occupies A18–G146. E59 lines the Mg(2+) pocket. The active site involves D63. Mg(2+) contacts are provided by D132 and E135. E135 is an active-site residue. One can recognise a DRBM domain in the interval N172–L241. A compositionally biased stretch (basic and acidic residues) spans R218 to A227. The interval R218–P242 is disordered.

It belongs to the ribonuclease III family. Homodimer. Mg(2+) is required as a cofactor.

It is found in the cytoplasm. The enzyme catalyses Endonucleolytic cleavage to 5'-phosphomonoester.. Functionally, digests double-stranded RNA. Involved in the processing of primary rRNA transcript to yield the immediate precursors to the large and small rRNAs (23S and 16S). Processes some mRNAs, and tRNAs when they are encoded in the rRNA operon. Processes pre-crRNA and tracrRNA of type II CRISPR loci if present in the organism. The chain is Ribonuclease 3 from Protochlamydia amoebophila (strain UWE25).